The following is an 83-amino-acid chain: uncharacterized protein (83 aa).

Helical transmembrane passes span 5 to 22, 32 to 49, and 56 to 78; these read VLLSIIIFLGINQNVYSI, IIKIVIILGIVILIFSPA, and IGTILGLACAYFTYKYIIPIFIA.

The protein localises to the cell membrane. This is an uncharacterized protein from Rickettsia prowazekii (strain Madrid E).